The chain runs to 193 residues: Acyl carrier protein phosphodiesterase (193 aa).

The protein belongs to the AcpH family.

It carries out the reaction holo-[ACP] + H2O = apo-[ACP] + (R)-4'-phosphopantetheine + H(+). Functionally, converts holo-ACP to apo-ACP by hydrolytic cleavage of the phosphopantetheine prosthetic group from ACP. The protein is Acyl carrier protein phosphodiesterase of Pectobacterium atrosepticum (strain SCRI 1043 / ATCC BAA-672) (Erwinia carotovora subsp. atroseptica).